We begin with the raw amino-acid sequence, 356 residues long: Protein trichome birefringence-like 41 (356 aa).

Residues 12–31 (SALVLSLLLLLLLPLLHEAA) form a helical; Signal-anchor for type II membrane protein membrane-spanning segment. The GDS motif signature appears at 107–109 (GDS). The DCXHWCLPGXXDXWN motif motif lies at 333-347 (DCSHWCLSGVPDTWN).

The protein belongs to the PC-esterase family. TBL subfamily.

It localises to the membrane. Its function is as follows. May act as a bridging protein that binds pectin and other cell wall polysaccharides. Probably involved in maintaining esterification of pectins. May be involved in the specific O-acetylation of cell wall polymers. The sequence is that of Protein trichome birefringence-like 41 (TBL41) from Arabidopsis thaliana (Mouse-ear cress).